The chain runs to 107 residues: Large ribosomal subunit protein uL23 (107 aa).

This sequence belongs to the universal ribosomal protein uL23 family. As to quaternary structure, part of the 50S ribosomal subunit. Contacts protein L29, and trigger factor when it is bound to the ribosome.

One of the early assembly proteins it binds 23S rRNA. One of the proteins that surrounds the polypeptide exit tunnel on the outside of the ribosome. Forms the main docking site for trigger factor binding to the ribosome. The sequence is that of Large ribosomal subunit protein uL23 from Gluconobacter oxydans (strain 621H) (Gluconobacter suboxydans).